The sequence spans 892 residues: DNA replication licensing factor mcm6 (892 aa).

Phosphoserine occurs at positions 96 and 98. In terms of domain architecture, MCM spans 426–633 (IYSRLTNSLA…VDRHLAKHIV (208 aa)). 476–483 (GDPSTSKS) lines the ATP pocket. An Arginine finger motif is present at residues 608 to 611 (SRFD). A compositionally biased stretch (acidic residues) spans 748–758 (EDDAEAQELEN). The tract at residues 748-774 (EDDAEAQELENDNTNTTNGNDNVSSEE) is disordered. Over residues 759–769 (DNTNTTNGNDN) the composition is skewed to low complexity.

The protein belongs to the MCM family. Component of the mcm2-7 complex. The complex forms a toroidal hexameric ring with the proposed subunit order mcm2-mcm6-mcm4-mcm7-mcm3-mcm5. The heterodimers of mcm4/mcm6 and mcm3/mcm5 interact with mcm2 and mcm7. Interacts with sld3.

The protein resides in the nucleus. The enzyme catalyses ATP + H2O = ADP + phosphate + H(+). Its function is as follows. Acts as a component of the mcm2-7 complex (mcm complex) which is the putative replicative helicase essential for 'once per cell cycle' DNA replication initiation and elongation in eukaryotic cells. The active ATPase sites in the mcm2-7 ring are formed through the interaction surfaces of two neighboring subunits such that a critical structure of a conserved arginine finger motif is provided in trans relative to the ATP-binding site of the Walker A box of the adjacent subunit. The six ATPase active sites, however, are likely to contribute differentially to the complex helicase activity. This is DNA replication licensing factor mcm6 (mcm6) from Schizosaccharomyces pombe (strain 972 / ATCC 24843) (Fission yeast).